A 768-amino-acid polypeptide reads, in one-letter code: Protein ITPRID2 (768 aa).

Disordered regions lie at residues 1–24 (MTTE…AEDS), 39–78 (LQAM…ESEE), and 98–124 (RKSG…CSPG). Polar residues-rich tracts occupy residues 39–57 (LQAM…TVTS) and 102–122 (SQDF…STCS). S153, S177, S246, S248, S255, S268, S276, and S312 each carry phosphoserine. The interval 315–338 (SVKKEEAPQSEAPRVEECHHGRTP) is disordered. The segment covering 316-334 (VKKEEAPQSEAPRVEECHH) has biased composition (basic and acidic residues). Residue K317 forms a Glycyl lysine isopeptide (Lys-Gly) (interchain with G-Cter in SUMO2) linkage. Residues S378 and S411 each carry the phosphoserine modification. The stretch at 468-546 (QELQVMRRSL…GLEEQLRAVR (79 aa)) forms a coiled coil. S549, S564, S569, S572, S627, and S643 each carry phosphoserine. Disordered regions lie at residues 605 to 647 (IPPG…VGKP) and 663 to 718 (ALTP…AAEE). The span at 610–627 (SSESVFSQATSESSSVCS) shows a compositional bias: polar residues. T665 bears the Phosphothreonine mark. Positions 667-677 (TAPSRTGSVQT) are enriched in polar residues. Position 670 is a phosphoserine (S670). A Phosphothreonine modification is found at T677. Residues 682-694 (ESSEEVDAAEEAP) show a composition bias toward acidic residues.

It localises to the cytoplasm. This is Protein ITPRID2 from Pongo abelii (Sumatran orangutan).